The chain runs to 159 residues: 2-C-methyl-D-erythritol 2,4-cyclodiphosphate synthase (159 aa).

Residues D10 and H12 each coordinate a divalent metal cation. Residues D10–H12 and H36–S37 contribute to the 4-CDP-2-C-methyl-D-erythritol 2-phosphate site. Residue H44 participates in a divalent metal cation binding. Residues D58 to G60, T134 to E137, F141, and R144 contribute to the 4-CDP-2-C-methyl-D-erythritol 2-phosphate site.

The protein belongs to the IspF family. Homotrimer. A divalent metal cation is required as a cofactor.

The enzyme catalyses 4-CDP-2-C-methyl-D-erythritol 2-phosphate = 2-C-methyl-D-erythritol 2,4-cyclic diphosphate + CMP. It functions in the pathway isoprenoid biosynthesis; isopentenyl diphosphate biosynthesis via DXP pathway; isopentenyl diphosphate from 1-deoxy-D-xylulose 5-phosphate: step 4/6. In terms of biological role, involved in the biosynthesis of isopentenyl diphosphate (IPP) and dimethylallyl diphosphate (DMAPP), two major building blocks of isoprenoid compounds. Catalyzes the conversion of 4-diphosphocytidyl-2-C-methyl-D-erythritol 2-phosphate (CDP-ME2P) to 2-C-methyl-D-erythritol 2,4-cyclodiphosphate (ME-CPP) with a corresponding release of cytidine 5-monophosphate (CMP). The protein is 2-C-methyl-D-erythritol 2,4-cyclodiphosphate synthase of Cereibacter sphaeroides (strain ATCC 17025 / ATH 2.4.3) (Rhodobacter sphaeroides).